A 451-amino-acid polypeptide reads, in one-letter code: Tubulin alpha-1A chain (451 aa).

GTP contacts are provided by Gly10, Gln11, Ala12, and Gln15. Lys40 carries the post-translational modification N6-acetyllysine. The GTP site is built by Glu71, Ala99, Ser140, Gly143, Gly144, Thr145, Gly146, Thr179, Glu183, Asn206, Tyr224, Asn228, and Leu252. Mg(2+) is bound at residue Glu71. The active site involves Glu254. The residue at position 282 (Tyr282) is a 3'-nitrotyrosine. Ser439 bears the Phosphoserine mark. Residues Glu443 and Glu445 each carry the 5-glutamyl polyglutamate modification. 3'-nitrotyrosine is present on Tyr451.

The protein belongs to the tubulin family. Heterodimer of alpha- and beta-tubulin. A typical microtubule is a hollow water-filled tube with an outer diameter of 25 nm and an inner diameter of 15 nM. Alpha-beta heterodimers associate head-to-tail to form protofilaments running lengthwise along the microtubule wall with the beta-tubulin subunit facing the microtubule plus end conferring a structural polarity. Microtubules usually have 13 protofilaments but different protofilament numbers can be found in some organisms and specialized cells. Interacts with gamma-tubulin; the interaction allows microtubules to nucleate from the gamma-tubulin ring complex (gTuRC). Nascent microtubule interacts (via alpha-tubulin MREC motif) with TTC5/STRAP; this interaction may result in tubulin mRNA-targeted degradation. Component of sperm flagellar doublet microtubules. Mg(2+) serves as cofactor. Post-translationally, some glutamate residues at the C-terminus are polyglycylated, resulting in polyglycine chains on the gamma-carboxyl group. Glycylation is mainly limited to tubulin incorporated into axonemes (cilia and flagella) whereas glutamylation is prevalent in neuronal cells, centrioles, axonemes, and the mitotic spindle. Both modifications can coexist on the same protein on adjacent residues, and lowering polyglycylation levels increases polyglutamylation, and reciprocally. Cilia and flagella glycylation is required for their stability and maintenance. Flagella glycylation controls sperm motility. In terms of processing, some glutamate residues at the C-terminus are polyglutamylated, resulting in polyglutamate chains on the gamma-carboxyl group. Polyglutamylation plays a key role in microtubule severing by spastin (SPAST). SPAST preferentially recognizes and acts on microtubules decorated with short polyglutamate tails: severing activity by SPAST increases as the number of glutamates per tubulin rises from one to eight, but decreases beyond this glutamylation threshold. Glutamylation is also involved in cilia motility. Acetylation of alpha chains at Lys-40 is located inside the microtubule lumen. This modification has been correlated with increased microtubule stability, intracellular transport and ciliary assembly. Post-translationally, methylation of alpha chains at Lys-40 is found in mitotic microtubules and is required for normal mitosis and cytokinesis contributing to genomic stability. In terms of processing, nitration of Tyr-451 is irreversible and interferes with normal dynein intracellular distribution. Undergoes a tyrosination/detyrosination cycle, the cyclic removal and re-addition of a C-terminal tyrosine residue by the enzymes tubulin tyrosine carboxypeptidase (MATCAP1, VASH1 or VASH2) and tubulin tyrosine ligase (TTL), respectively. Post-translationally, tyrosination promotes microtubule interaction with CAP-Gly domain-containing proteins such as CLIP1, CLIP2 and DCTN1. Tyrosination regulates the initiation of dynein-dynactin motility via interaction with DCTN1, which brings the dynein-dynactin complex into contact with microtubules. In neurons, tyrosinated tubulins mediate the initiation of retrograde vesicle transport. In terms of processing, detyrosination is involved in metaphase plate congression by guiding chromosomes during mitosis: detyrosination promotes interaction with CENPE, promoting pole-proximal transport of chromosomes toward the equator. Detyrosination increases microtubules-dependent mechanotransduction in dystrophic cardiac and skeletal muscle. In cardiomyocytes, detyrosinated microtubules are required to resist to contractile compression during contraction: detyrosination promotes association with desmin (DES) at force-generating sarcomeres, leading to buckled microtubules and mechanical resistance to contraction.

The protein localises to the cytoplasm. Its subcellular location is the cytoskeleton. It localises to the flagellum axoneme. The enzyme catalyses GTP + H2O = GDP + phosphate + H(+). Functionally, tubulin is the major constituent of microtubules, protein filaments consisting of alpha- and beta-tubulin heterodimers. Microtubules grow by the addition of GTP-tubulin dimers to the microtubule end, where a stabilizing cap forms. Below the cap, tubulin dimers are in GDP-bound state, owing to GTPase activity of alpha-tubulin. This is Tubulin alpha-1A chain (TUBA1A) from Sus scrofa (Pig).